We begin with the raw amino-acid sequence, 394 residues long: Putative 8-amino-7-oxononanoate synthase (394 aa).

Position 30 (Arg-30) interacts with substrate. 117-118 (GY) contributes to the pyridoxal 5'-phosphate binding site. His-142 provides a ligand contact to substrate. Pyridoxal 5'-phosphate is bound by residues Ser-190, 215–218 (DEAH), and 246–249 (TLSK). Lys-249 is subject to N6-(pyridoxal phosphate)lysine. Thr-364 provides a ligand contact to substrate.

Belongs to the class-II pyridoxal-phosphate-dependent aminotransferase family. BioF subfamily. As to quaternary structure, homodimer. Pyridoxal 5'-phosphate serves as cofactor.

The catalysed reaction is 6-carboxyhexanoyl-[ACP] + L-alanine + H(+) = (8S)-8-amino-7-oxononanoate + holo-[ACP] + CO2. Its pathway is cofactor biosynthesis; biotin biosynthesis. Functionally, catalyzes the decarboxylative condensation of pimeloyl-[acyl-carrier protein] and L-alanine to produce 8-amino-7-oxononanoate (AON), [acyl-carrier protein], and carbon dioxide. The protein is Putative 8-amino-7-oxononanoate synthase (bioF) of Nostoc punctiforme (strain ATCC 29133 / PCC 73102).